The following is a 320-amino-acid chain: Cytochrome f (320 aa).

An N-terminal signal peptide occupies residues 1 to 36 (MKHTNSKQKLKDIINFCQAIFTLCIICLYQANISNS). Residues Tyr-37, Cys-57, Cys-60, and His-61 each contribute to the heme site. A helical membrane pass occupies residues 286–305 (LISFIFFSISVLISQLFFVL).

It belongs to the cytochrome f family. In terms of assembly, the 4 large subunits of the cytochrome b6-f complex are cytochrome b6, subunit IV (17 kDa polypeptide, petD), cytochrome f and the Rieske protein, while the 4 small subunits are PetG, PetL, PetM and PetN. The complex functions as a dimer. Heme is required as a cofactor.

The protein resides in the plastid. It localises to the chloroplast thylakoid membrane. Component of the cytochrome b6-f complex, which mediates electron transfer between photosystem II (PSII) and photosystem I (PSI), cyclic electron flow around PSI, and state transitions. The polypeptide is Cytochrome f (petA) (Cyanidium caldarium (Red alga)).